The chain runs to 479 residues: Ribosomal RNA small subunit methyltransferase F (479 aa).

S-adenosyl-L-methionine contacts are provided by residues 125–131 (AAAPGSK), Glu149, Asp176, and Asp194. The active-site Nucleophile is Cys247.

It belongs to the class I-like SAM-binding methyltransferase superfamily. RsmB/NOP family.

It is found in the cytoplasm. The enzyme catalyses cytidine(1407) in 16S rRNA + S-adenosyl-L-methionine = 5-methylcytidine(1407) in 16S rRNA + S-adenosyl-L-homocysteine + H(+). Specifically methylates the cytosine at position 1407 (m5C1407) of 16S rRNA. This is Ribosomal RNA small subunit methyltransferase F from Shigella boydii serotype 18 (strain CDC 3083-94 / BS512).